The primary structure comprises 296 residues: Short-chain dehydrogenase/reductase ascJ (296 aa).

The NADP(+) site is built by Ile28, Asp66, and Asn93. Ser155 acts as the Proton donor in catalysis. Tyr168, Lys172, and Thr205 together coordinate NADP(+). Tyr168 serves as the catalytic Proton acceptor. Lys172 acts as the Lowers pKa of active site Tyr in catalysis.

The protein belongs to the short-chain dehydrogenases/reductases (SDR) family.

The enzyme catalyses ascofuranol + A = ascofuranone + AH2. It participates in secondary metabolite biosynthesis; terpenoid biosynthesis. In terms of biological role, short-chain dehydrogenase/reductase; part of the asc-2 gene cluster that mediates the biosynthesis of ascofuranone, a strong inhibitor of cyanide-insensitive alternative oxidases and a promising drug candidate against African trypanosomiasis. The first step in the pathway is performed by the non-reducing polyketide synthase ascC that produces orsellinic acid by condensing acetyl-CoA with 3 malonyl-CoA units. Orsellinic acid is then prenylated by the prenyltransferase ascA to yield ilicicolinic acid B. Ilicicolinic acid B is further reduced to ilicicolin B by the reductase ascB. The halogenase ascD then chlorinates ilicicolin B to produce ilicicolin A which is converted to ilicicolin A epoxide by the cytochrome P450 monooxygenase ascE that catalyzes stereoselective epoxidation of the terminal double bond of the prenyl group. Ilicicolin A epoxide is the last common precursor for the biosynthesis of ascofuranone and ascochlorin. The terpene cyclase ascF produces a monocyclic terpene, and the cyclization reaction is proposed to be initiated by protonation of the terminal epoxide of ilicicolin A epoxide to generate a monocyclic tertiarycation, which is followed by a series of hydride and methyl shifts with abstraction of proton, leading to the formation of the (14S,15R,19R)-trimethylcyclohexanone ring structure of ilicicolin C, which is finally reduced to ascochlorin by the dehydrogenase ascG. On the other hand, ilicicolin A epoxide is hydroxylated by the cytochrome P450 monooxygenase ascH, and the resultant product is cyclized by the terpene cyclase ascI to ascofuranol via protonation-initiated epoxide ring opening, which facilitates the 6-endo-tet cyclization to form the tetrahy-drofuran ring. Finally, ascofuranol is oxidized into ascofuranone by ascJ. This Acremonium egyptiacum (Oospora egyptiaca) protein is Short-chain dehydrogenase/reductase ascJ.